The following is a 256-amino-acid chain: MNDQRKGDHAEPTTHFGYQDVPESQKAKKVAEVFHSVAAKYDLMNDVLSGGMHRLWKRFTIELSGVRSGNRVLDIAGGTGDLAAKFSRLVGPTGQVVLADINDSMLKVGRDRLLDRGVAGNIEFVQADAEKLPFPDNHFDCVTIAFGLRNVTHKDEAIRSMLRVLKPGGRLLILEFSKPTNKLMSRAYDAYSFAFMPLAGKLITNDAESYRYLAESIRMHPDQETLKSMMVEAGFDRVTYHNMTSGIVAVHRGIKP.

Residues 1-12 (MNDQRKGDHAEP) are compositionally biased toward basic and acidic residues. The segment at 1 to 23 (MNDQRKGDHAEPTTHFGYQDVPE) is disordered. Residues threonine 79, aspartate 100, and 128-129 (DA) contribute to the S-adenosyl-L-methionine site.

This sequence belongs to the class I-like SAM-binding methyltransferase superfamily. MenG/UbiE family.

It carries out the reaction a 2-demethylmenaquinol + S-adenosyl-L-methionine = a menaquinol + S-adenosyl-L-homocysteine + H(+). It catalyses the reaction a 2-methoxy-6-(all-trans-polyprenyl)benzene-1,4-diol + S-adenosyl-L-methionine = a 5-methoxy-2-methyl-3-(all-trans-polyprenyl)benzene-1,4-diol + S-adenosyl-L-homocysteine + H(+). Its pathway is quinol/quinone metabolism; menaquinone biosynthesis; menaquinol from 1,4-dihydroxy-2-naphthoate: step 2/2. It participates in cofactor biosynthesis; ubiquinone biosynthesis. Functionally, methyltransferase required for the conversion of demethylmenaquinol (DMKH2) to menaquinol (MKH2) and the conversion of 2-polyprenyl-6-methoxy-1,4-benzoquinol (DDMQH2) to 2-polyprenyl-3-methyl-6-methoxy-1,4-benzoquinol (DMQH2). The chain is Ubiquinone/menaquinone biosynthesis C-methyltransferase UbiE from Pseudomonas putida (strain GB-1).